We begin with the raw amino-acid sequence, 205 residues long: DNA-directed RNA polymerase subunit 5 (205 aa).

The protein belongs to the archaeal Rpo5/eukaryotic RPB5 RNA polymerase subunit family.

Its subcellular location is the virion. The catalysed reaction is RNA(n) + a ribonucleoside 5'-triphosphate = RNA(n+1) + diphosphate. In terms of biological role, DNA-dependent RNA polymerase catalyzes the transcription of DNA into RNA using the four ribonucleoside triphosphates as substrates. The sequence is that of DNA-directed RNA polymerase subunit 5 from Acanthamoeba polyphaga (Amoeba).